A 360-amino-acid chain; its full sequence is Heat-inducible transcription repressor HrcA (360 aa).

This sequence belongs to the HrcA family.

In terms of biological role, negative regulator of class I heat shock genes (grpE-dnaK-dnaJ and groELS operons). Prevents heat-shock induction of these operons. The polypeptide is Heat-inducible transcription repressor HrcA (Mesorhizobium japonicum (strain LMG 29417 / CECT 9101 / MAFF 303099) (Mesorhizobium loti (strain MAFF 303099))).